The following is an 837-amino-acid chain: Ribosome-releasing factor 2, mitochondrial (837 aa).

The N-terminal 29 residues, 1-29 (MFSINARTKVPIWVPFIARKGFSMSTRQL), are a transit peptide targeting the mitochondrion. Positions 40 to 331 (LNTRNIGIIA…GVVDYLPSPL (292 aa)) constitute a tr-type G domain. Residues 49-56 (AHIDAGKT), 113-117 (DTPGH), and 167-170 (NKMD) each bind GTP. The disordered stretch occupies residues 338–359 (ITASTSKVSKKQKQKKNSKVSS). Basic residues predominate over residues 345 to 355 (VSKKQKQKKNS).

The protein belongs to the TRAFAC class translation factor GTPase superfamily. Classic translation factor GTPase family. EF-G/EF-2 subfamily.

The protein resides in the mitochondrion. Mitochondrial GTPase that mediates the disassembly of ribosomes from messenger RNA at the termination of mitochondrial protein biosynthesis. Not involved in the GTP-dependent ribosomal translocation step during translation elongation. In Meyerozyma guilliermondii (strain ATCC 6260 / CBS 566 / DSM 6381 / JCM 1539 / NBRC 10279 / NRRL Y-324) (Yeast), this protein is Ribosome-releasing factor 2, mitochondrial.